The sequence spans 194 residues: Peptidyl-tRNA hydrolase (194 aa).

Tyr17 is a tRNA binding site. Residue His22 is the Proton acceptor of the active site. TRNA-binding residues include Phe68, Asn70, and Asn116.

Belongs to the PTH family. Monomer.

It is found in the cytoplasm. The catalysed reaction is an N-acyl-L-alpha-aminoacyl-tRNA + H2O = an N-acyl-L-amino acid + a tRNA + H(+). Functionally, hydrolyzes ribosome-free peptidyl-tRNAs (with 1 or more amino acids incorporated), which drop off the ribosome during protein synthesis, or as a result of ribosome stalling. Its function is as follows. Catalyzes the release of premature peptidyl moieties from peptidyl-tRNA molecules trapped in stalled 50S ribosomal subunits, and thus maintains levels of free tRNAs and 50S ribosomes. The sequence is that of Peptidyl-tRNA hydrolase from Shewanella woodyi (strain ATCC 51908 / MS32).